The chain runs to 721 residues: Glycine--tRNA ligase beta subunit (721 aa).

The protein belongs to the class-II aminoacyl-tRNA synthetase family. Tetramer of two alpha and two beta subunits.

It is found in the cytoplasm. It carries out the reaction tRNA(Gly) + glycine + ATP = glycyl-tRNA(Gly) + AMP + diphosphate. The polypeptide is Glycine--tRNA ligase beta subunit (Sinorhizobium fredii (strain NBRC 101917 / NGR234)).